The primary structure comprises 236 residues: Thymidylate kinase (236 aa).

Residue 9-16 (GPEGSGKS) coordinates ATP.

Belongs to the thymidylate kinase family.

It carries out the reaction dTMP + ATP = dTDP + ADP. In terms of biological role, phosphorylation of dTMP to form dTDP in both de novo and salvage pathways of dTTP synthesis. The protein is Thymidylate kinase of Herpetosiphon aurantiacus (strain ATCC 23779 / DSM 785 / 114-95).